We begin with the raw amino-acid sequence, 609 residues long: Glutamine--fructose-6-phosphate aminotransferase [isomerizing] (609 aa).

Catalysis depends on Cys2, which acts as the Nucleophile; for GATase activity. The Glutamine amidotransferase type-2 domain maps to 2–218; it reads CGIVGAIAQR…EGDIAEITRR (217 aa). SIS domains lie at 286–426 and 458–599; these read ADEL…LKGL and LAED…VDQP. Lys604 functions as the For Fru-6P isomerization activity in the catalytic mechanism.

In terms of assembly, homodimer.

The protein localises to the cytoplasm. It catalyses the reaction D-fructose 6-phosphate + L-glutamine = D-glucosamine 6-phosphate + L-glutamate. Its function is as follows. Catalyzes the first step in hexosamine metabolism, converting fructose-6P into glucosamine-6P using glutamine as a nitrogen source. The protein is Glutamine--fructose-6-phosphate aminotransferase [isomerizing] of Escherichia coli O157:H7.